Reading from the N-terminus, the 138-residue chain is ATP synthase epsilon chain (138 aa).

This sequence belongs to the ATPase epsilon chain family. F-type ATPases have 2 components, CF(1) - the catalytic core - and CF(0) - the membrane proton channel. CF(1) has five subunits: alpha(3), beta(3), gamma(1), delta(1), epsilon(1). CF(0) has three main subunits: a, b and c.

It localises to the cell membrane. Functionally, produces ATP from ADP in the presence of a proton gradient across the membrane. In Buchnera aphidicola subsp. Schizaphis graminum (strain Sg), this protein is ATP synthase epsilon chain (atpC).